A 636-amino-acid polypeptide reads, in one-letter code: MNGSMGAAGGQVENERAAEVPVSTLEMRTLSPETFLYTEVARSHLGERAGRVIELLLNKGRLSVSELVHLAPELGSKSVRTVLVSLIQLRCVQYLEETTVSGRKITYYYFNEDGFQLMLYAGDIVAAVESQFEADDAKEIAAQIVQNVLALGSLTTKDYMQSLASDVSVNDVASMFVKLVELGFLVPLSNVHYMPLADLWDVLYKKEYNAIPKNSTLSDAKKRAETKAKTKVQFNTLLKNVEMSNVLMTDMQTSMRRVQDNLPLTFNFGRYMKHRRSRQLVQFARSRVGSVPAMIYKVALKITEQCARALSDPLCETGLMQELEEQLAIQEDMALDDEKLPGVTFNAVDISRNLPNNIDLRGTLTSMQRRSQERSTHQGQSHKRLKAEDGMAVAVNHLATVEEEAEGDELLHGSDDDMDMFFDEGDSDPKSVSLINGHLKLLSTGSVPFLIESRPGLFYVPYSKLMPILKEAVYDAIIASTLGPSAHRILRCVRDNSLVSEKVINNTALMREKDIRSVIATLVKYNAVDILEVPRTADRAASRAVFLFKINEKHAYDFMKQNLAWNIANSIHKTEILKEENFTLLSKAQRDDVKGREAELLLPSELNQLKMVNERELNGHARKIRLLSMWEVFKML.

Residues 366 to 385 (SMQRRSQERSTHQGQSHKRL) form a disordered region. The leucine-zipper stretch occupies residues 563–584 (LAWNIANSIHKTEILKEENFTL).

Belongs to the RNA polymerase beta chain family. As to quaternary structure, component of the RNA polymerase III (Pol III) complex consisting of 17 subunits.

Its subcellular location is the nucleus. Its function is as follows. DNA-dependent RNA polymerase catalyzes the transcription of DNA into RNA using the four ribonucleoside triphosphates as substrates. Specific core component of RNA polymerase III which synthesizes small RNAs, such as 5S rRNA and tRNAs. This is DNA-directed RNA polymerase III subunit RPC3 (RPC82) from Eremothecium gossypii (strain ATCC 10895 / CBS 109.51 / FGSC 9923 / NRRL Y-1056) (Yeast).